Reading from the N-terminus, the 384-residue chain is tRNA-dihydrouridine(20) synthase [NAD(P)+] (384 aa).

FMN-binding positions include 12–14 (PMV) and Gln-88. Cys-117 functions as the Proton donor in the catalytic mechanism. FMN contacts are provided by residues Lys-160, His-188, 222-224 (NGA), and 249-250 (AE). Positions 359 to 384 (KQKRKQTDHIGSDTKKQKVVPLPTDI) are disordered. The segment covering 363 to 374 (KQTDHIGSDTKK) has biased composition (basic and acidic residues).

The protein belongs to the Dus family. Dus2 subfamily. As to quaternary structure, monomer. The cofactor is FMN. In terms of processing, N-glycosylated.

Its subcellular location is the cytoplasm. It is found in the nucleus. It catalyses the reaction 5,6-dihydrouridine(20) in tRNA + NADP(+) = uridine(20) in tRNA + NADPH + H(+). The catalysed reaction is 5,6-dihydrouridine(20) in tRNA + NAD(+) = uridine(20) in tRNA + NADH + H(+). The enzyme catalyses a 5,6-dihydrouridine in mRNA + NAD(+) = a uridine in mRNA + NADH + H(+). It carries out the reaction a 5,6-dihydrouridine in mRNA + NADP(+) = a uridine in mRNA + NADPH + H(+). Its function is as follows. Catalyzes the NADPH-dependent synthesis of dihydrouridine, a modified base found in the D-loop of most tRNAs. Specifically modifies U20 in cytoplasmic tRNAs. Also able to mediate dihydrouridylation of some mRNAs, thereby affecting their translation. This Saccharomyces cerevisiae (strain ATCC 204508 / S288c) (Baker's yeast) protein is tRNA-dihydrouridine(20) synthase [NAD(P)+] (SMM1).